A 244-amino-acid chain; its full sequence is Vesicle-associated membrane protein-associated protein SCS2 (244 aa).

Ser-2 is subject to N-acetylserine. Residues 2 to 222 are Cytoplasmic-facing; the sequence is SAVEISPDVL…EAATVPAENE (221 aa). The region spanning 3-126 is the MSP domain; sequence AVEISPDVLV…ISKKIKVKYL (124 aa). Position 106 is a phosphoserine (Ser-106). A disordered region spans residues 135 to 219; the sequence is QNQNIQENKE…QIKEAATVPA (85 aa). Over residues 153–168 the composition is skewed to basic and acidic residues; that stretch reads SEPKEVPAVVNEKEVP. The span at 199–211 shows a compositional bias: polar residues; the sequence is QTSNSTPAPQNQI. Residues 223 to 243 form a helical; Anchor for type IV membrane protein membrane-spanning segment; the sequence is SSSMGIFILVALLILVLGWFY. Position 244 (Arg-244) is a topological domain, lumenal.

The protein belongs to the VAMP-associated protein (VAP) (TC 9.B.17) family. As to quaternary structure, interacts with OPI1. Also interacts with PBI1. Interacts with EPO1.

It localises to the endoplasmic reticulum membrane. The protein localises to the nucleus membrane. In terms of biological role, acts as an endoplasmic reticulum (ER) membrane anchor for cytoplasmic proteins via binding to the FFAT motif of targeted proteins. Regulates phospholipid biosynthesis by modulating the subcellular localization of the transcriptional repressor OPI1. Also contributes to the tethering of the ER to the plasma membrane. Allows interorganelle phosphatidylserine (PtdSer) transport via a process that involves the acceptor membrane complex PDR17-PDS2 that binds to PBI1 which in turn ligates to SCS2 and phosphatidic acid present in the donor membrane, forming a zone of apposition that facilitates PtdSer transfer. In Saccharomyces cerevisiae (strain ATCC 204508 / S288c) (Baker's yeast), this protein is Vesicle-associated membrane protein-associated protein SCS2.